Here is a 267-residue protein sequence, read N- to C-terminus: Hydroxyethylthiazole kinase (267 aa).

M42 contributes to the substrate binding site. ATP contacts are provided by R118 and S164. Position 191 (A191) interacts with substrate.

The protein belongs to the Thz kinase family. Mg(2+) serves as cofactor.

The catalysed reaction is 5-(2-hydroxyethyl)-4-methylthiazole + ATP = 4-methyl-5-(2-phosphooxyethyl)-thiazole + ADP + H(+). It participates in cofactor biosynthesis; thiamine diphosphate biosynthesis; 4-methyl-5-(2-phosphoethyl)-thiazole from 5-(2-hydroxyethyl)-4-methylthiazole: step 1/1. Catalyzes the phosphorylation of the hydroxyl group of 4-methyl-5-beta-hydroxyethylthiazole (THZ). This Pasteurella multocida (strain Pm70) protein is Hydroxyethylthiazole kinase.